An 839-amino-acid chain; its full sequence is Protein translocase subunit SecA (839 aa).

ATP is bound by residues Gln-85, 103–107 (GEGKT), and Asp-493. The span at 780–790 (QIHEQERERAS) shows a compositional bias: basic and acidic residues. The tract at residues 780 to 839 (QIHEQERERASQRATTAAPQNIQSQQSANTDDLPKVERNEACPCGSGKKFKNCHGRKSFS) is disordered. Over residues 791–809 (QRATTAAPQNIQSQQSANT) the composition is skewed to polar residues. Zn(2+) is bound by residues Cys-821, Cys-823, Cys-832, and His-833. The segment covering 827–839 (KKFKNCHGRKSFS) has biased composition (basic residues).

Belongs to the SecA family. In terms of assembly, monomer and homodimer. Part of the essential Sec protein translocation apparatus which comprises SecA, SecYEG and auxiliary proteins SecDF. Other proteins may also be involved. Requires Zn(2+) as cofactor.

The protein localises to the cell membrane. It is found in the cytoplasm. The catalysed reaction is ATP + H2O + cellular proteinSide 1 = ADP + phosphate + cellular proteinSide 2.. Functionally, part of the Sec protein translocase complex. Interacts with the SecYEG preprotein conducting channel. Has a central role in coupling the hydrolysis of ATP to the transfer of proteins into and across the cell membrane, serving as an ATP-driven molecular motor driving the stepwise translocation of polypeptide chains across the membrane. In Streptococcus pyogenes serotype M6 (strain ATCC BAA-946 / MGAS10394), this protein is Protein translocase subunit SecA.